Reading from the N-terminus, the 257-residue chain is Small ribosomal subunit protein eS1 (257 aa).

The segment at 236–257 (TSAEGEKIERPDDYEPPVQESV) is disordered. Residues 239–248 (EGEKIERPDD) are compositionally biased toward basic and acidic residues.

The protein belongs to the eukaryotic ribosomal protein eS1 family. As to quaternary structure, component of the small ribosomal subunit. Mature ribosomes consist of a small (40S) and a large (60S) subunit. The 40S subunit contains about 33 different proteins and 1 molecule of RNA (18S). The 60S subunit contains about 49 different proteins and 3 molecules of RNA (28S, 5.8S and 5S).

The protein resides in the cytoplasm. The protein is Small ribosomal subunit protein eS1 of Brugia malayi (Filarial nematode worm).